Consider the following 73-residue polypeptide: Guanine nucleotide-binding protein G(I)/G(S)/G(O) subunit gamma-11 (73 aa).

Residues 54–73 (VKGIPEDKNPFKEKGSCIIS) form a disordered region. The residue at position 70 (C70) is a Cysteine methyl ester. C70 is lipidated: S-farnesyl cysteine. Positions 71–73 (IIS) are cleaved as a propeptide — removed in mature form.

The protein belongs to the G protein gamma family. In terms of assembly, g proteins are composed of 3 units, alpha, beta and gamma. Interacts with beta-1 and beta-3, but not with beta-2.

Its subcellular location is the cell membrane. Guanine nucleotide-binding proteins (G proteins) are involved as a modulator or transducer in various transmembrane signaling systems. The beta and gamma chains are required for the GTPase activity, for replacement of GDP by GTP, and for G protein-effector interaction. The chain is Guanine nucleotide-binding protein G(I)/G(S)/G(O) subunit gamma-11 (GNG11) from Bos taurus (Bovine).